We begin with the raw amino-acid sequence, 785 residues long: Pre-rRNA-processing protein TSR1 homolog (785 aa).

The disordered stretch occupies residues 1–59 (MSTTGHRAGVFKKPSKPHKSWKGKRTKGEITSENRGREGVKQLTRSAHSTHRTISKDAR). Residues 9 to 25 (GVFKKPSKPHKSWKGKR) show a composition bias toward basic residues. The segment covering 26–40 (TKGEITSENRGREGV) has biased composition (basic and acidic residues). The Bms1-type G domain occupies 83-243 (APCLVTVVSL…LRILNETKKK (161 aa)). The disordered stretch occupies residues 307–426 (PHPLKAHNKT…GETTASEMMF (120 aa)). A compositionally biased stretch (acidic residues) spans 376 to 409 (LDDEDDEDEEDSDEDMDDSDNEEVEDDSEEEEPM).

Belongs to the TRAFAC class translation factor GTPase superfamily. Bms1-like GTPase family. TSR1 subfamily.

It is found in the nucleus. The protein localises to the nucleolus. Its function is as follows. Required during maturation of the 40S ribosomal subunit in the nucleolus. This Caenorhabditis elegans protein is Pre-rRNA-processing protein TSR1 homolog (tag-151).